A 268-amino-acid chain; its full sequence is Exopolysaccharide production negative regulator (268 aa).

An N-terminal signal peptide occupies residues 1–22; sequence MRAGELKSLRVAVLGMSLAVGA.

Negatively modulates exopolysaccharide (EPS) biosynthesis. The protein is Exopolysaccharide production negative regulator (exoR) of Rhizobium meliloti (strain 1021) (Ensifer meliloti).